A 287-amino-acid polypeptide reads, in one-letter code: ATP synthase gamma chain (287 aa).

This sequence belongs to the ATPase gamma chain family. As to quaternary structure, F-type ATPases have 2 components, CF(1) - the catalytic core - and CF(0) - the membrane proton channel. CF(1) has five subunits: alpha(3), beta(3), gamma(1), delta(1), epsilon(1). CF(0) has three main subunits: a, b and c. The F(1)F(0) complex interacts with SpoIIIJ and YqjG; YqgA is found in the same complex. Interacts with FloT.

It localises to the cell membrane. The protein localises to the membrane raft. Its function is as follows. Produces ATP from ADP in the presence of a proton gradient across the membrane. The gamma chain is believed to be important in regulating ATPase activity and the flow of protons through the CF(0) complex. This Bacillus subtilis (strain 168) protein is ATP synthase gamma chain.